A 232-amino-acid chain; its full sequence is Large ribosomal subunit protein uL1 (232 aa).

This sequence belongs to the universal ribosomal protein uL1 family. As to quaternary structure, part of the 50S ribosomal subunit.

In terms of biological role, binds directly to 23S rRNA. The L1 stalk is quite mobile in the ribosome, and is involved in E site tRNA release. Functionally, protein L1 is also a translational repressor protein, it controls the translation of the L11 operon by binding to its mRNA. The sequence is that of Large ribosomal subunit protein uL1 from Syntrophus aciditrophicus (strain SB).